We begin with the raw amino-acid sequence, 309 residues long: Protein FdhE homolog (309 aa).

Belongs to the FdhE family.

Its subcellular location is the cytoplasm. In terms of biological role, necessary for formate dehydrogenase activity. This chain is Protein FdhE homolog, found in Pectobacterium atrosepticum (strain SCRI 1043 / ATCC BAA-672) (Erwinia carotovora subsp. atroseptica).